The chain runs to 429 residues: Serum response factor-binding protein 1 (429 aa).

Alanine 2 is modified (N-acetylalanine). Coiled-coil stretches lie at residues 42-67 (KGTEDALLKNQRRAQRLLEEIHAMKE) and 108-144 (LLKKKIDVLKAAVQAFKEARQNVTEVESSKNASEDNH). Polar residues-rich tracts occupy residues 128-138 (QNVTEVESSKN) and 146-160 (KNTLYSNDNGSNLQR). Disordered regions lie at residues 128-285 (QNVT…GDDF) and 311-429 (EKVF…TFDD). Positions 183 to 195 (NSKEKIAKMEHGP) are enriched in basic and acidic residues. Lysine 190 is covalently cross-linked (Glycyl lysine isopeptide (Lys-Gly) (interchain with G-Cter in SUMO2)). 5 positions are modified to phosphoserine: serine 203, serine 205, serine 264, serine 279, and serine 281. Positions 249–265 (GGEELCEEEKEYFDDST) are enriched in acidic residues. The span at 311 to 341 (EKVFLKEDTGETHGDTRNDKTKPSTETRKLE) shows a compositional bias: basic and acidic residues. Lysine 316 is covalently cross-linked (Glycyl lysine isopeptide (Lys-Gly) (interchain with G-Cter in SUMO2)). Residues serine 349, serine 351, and serine 367 each carry the phosphoserine modification. Over residues 357 to 367 (NFKEQAPKTRS) the composition is skewed to basic and acidic residues. Residues 373 to 383 (NEPQFKNQFNK) are compositionally biased toward polar residues.

In terms of assembly, interacts with SRF. Forms complexes with SRF and SRF cofactors ARID2, MYOCD and NKX2-5. Interacts with the N-terminus of SLC2A4.

Its subcellular location is the cytoplasm. The protein localises to the perinuclear region. Functionally, may be involved in regulating transcriptional activation of cardiac genes during the aging process. May play a role in biosynthesis and/or processing of SLC2A4 in adipose cells. This is Serum response factor-binding protein 1 from Pongo abelii (Sumatran orangutan).